The sequence spans 347 residues: NAD-dependent alcohol dehydrogenase (347 aa).

N6-methyllysine is present on Lys11. Cys38, His68, Glu98, Cys101, Cys104, Cys112, and Cys154 together coordinate Zn(2+). Lys213 is subject to N6-methyllysine.

The protein belongs to the zinc-containing alcohol dehydrogenase family. As to quaternary structure, homodimer and homotetramer. Requires Zn(2+) as cofactor.

It carries out the reaction a primary alcohol + NAD(+) = an aldehyde + NADH + H(+). The catalysed reaction is a secondary alcohol + NAD(+) = a ketone + NADH + H(+). This Sulfurisphaera tokodaii (strain DSM 16993 / JCM 10545 / NBRC 100140 / 7) (Sulfolobus tokodaii) protein is NAD-dependent alcohol dehydrogenase (adh).